Reading from the N-terminus, the 142-residue chain is Nucleoside diphosphate kinase (142 aa).

The ATP site is built by Lys-11, Phe-59, Arg-87, Thr-93, Arg-104, and Asn-114. His-117 functions as the Pros-phosphohistidine intermediate in the catalytic mechanism.

The protein belongs to the NDK family. As to quaternary structure, homotetramer. Mg(2+) serves as cofactor.

It localises to the cytoplasm. It catalyses the reaction a 2'-deoxyribonucleoside 5'-diphosphate + ATP = a 2'-deoxyribonucleoside 5'-triphosphate + ADP. It carries out the reaction a ribonucleoside 5'-diphosphate + ATP = a ribonucleoside 5'-triphosphate + ADP. Major role in the synthesis of nucleoside triphosphates other than ATP. The ATP gamma phosphate is transferred to the NDP beta phosphate via a ping-pong mechanism, using a phosphorylated active-site intermediate. The sequence is that of Nucleoside diphosphate kinase from Yersinia pseudotuberculosis serotype I (strain IP32953).